Here is an 807-residue protein sequence, read N- to C-terminus: Dual specificity protein phosphatase PPS1 (807 aa).

The Tyrosine-protein phosphatase domain occupies 585–783 (LPSRILRHLY…LFKWWKKHYN (199 aa)). Residues 593-807 (LYLGSLDHAQ…GIAEVNMKYT (215 aa)) form a catalytic region. Cysteine 725 functions as the Phosphocysteine intermediate in the catalytic mechanism.

This sequence belongs to the protein-tyrosine phosphatase family. Non-receptor class dual specificity subfamily.

The enzyme catalyses O-phospho-L-tyrosyl-[protein] + H2O = L-tyrosyl-[protein] + phosphate. It carries out the reaction O-phospho-L-seryl-[protein] + H2O = L-seryl-[protein] + phosphate. It catalyses the reaction O-phospho-L-threonyl-[protein] + H2O = L-threonyl-[protein] + phosphate. Protein phosphatase with specificity for serine, threonine, and tyrosine residues; has a role in the DNA synthesis phase of the cell cycle. This Saccharomyces cerevisiae (strain ATCC 204508 / S288c) (Baker's yeast) protein is Dual specificity protein phosphatase PPS1 (PPS1).